Reading from the N-terminus, the 212-residue chain is Ion-translocating oxidoreductase complex subunit G (212 aa).

The helical transmembrane segment at 9–29 (GLLLGLFALLCTGLVAIVNQL) threads the bilayer. At T176 the chain carries FMN phosphoryl threonine.

The protein belongs to the RnfG family. As to quaternary structure, the complex is composed of six subunits: RnfA, RnfB, RnfC, RnfD, RnfE and RnfG. FMN is required as a cofactor.

It is found in the cell inner membrane. Part of a membrane-bound complex that couples electron transfer with translocation of ions across the membrane. The protein is Ion-translocating oxidoreductase complex subunit G of Shewanella piezotolerans (strain WP3 / JCM 13877).